A 485-amino-acid chain; its full sequence is Glutamyl-tRNA(Gln) amidotransferase subunit A (485 aa).

Residues lysine 78 and serine 153 each act as charge relay system in the active site. Serine 177 acts as the Acyl-ester intermediate in catalysis.

The protein belongs to the amidase family. GatA subfamily. As to quaternary structure, heterotrimer of A, B and C subunits.

The catalysed reaction is L-glutamyl-tRNA(Gln) + L-glutamine + ATP + H2O = L-glutaminyl-tRNA(Gln) + L-glutamate + ADP + phosphate + H(+). Allows the formation of correctly charged Gln-tRNA(Gln) through the transamidation of misacylated Glu-tRNA(Gln) in organisms which lack glutaminyl-tRNA synthetase. The reaction takes place in the presence of glutamine and ATP through an activated gamma-phospho-Glu-tRNA(Gln). The chain is Glutamyl-tRNA(Gln) amidotransferase subunit A from Geobacter metallireducens (strain ATCC 53774 / DSM 7210 / GS-15).